Reading from the N-terminus, the 912-residue chain is Bifunctional uridylyltransferase/uridylyl-removing enzyme (912 aa).

The uridylyltransferase stretch occupies residues methionine 1–lysine 369. A uridylyl-removing region spans residues lysine 370–threonine 722. Positions valine 486 to leucine 608 constitute an HD domain. ACT domains follow at residues leucine 723 to glutamine 802 and valine 834 to alanine 912.

Belongs to the GlnD family. Requires Mg(2+) as cofactor.

It carries out the reaction [protein-PII]-L-tyrosine + UTP = [protein-PII]-uridylyl-L-tyrosine + diphosphate. It catalyses the reaction [protein-PII]-uridylyl-L-tyrosine + H2O = [protein-PII]-L-tyrosine + UMP + H(+). Its activity is regulated as follows. Uridylyltransferase (UTase) activity is inhibited by glutamine, while glutamine activates uridylyl-removing (UR) activity. Modifies, by uridylylation and deuridylylation, the PII regulatory proteins (GlnB and homologs), in response to the nitrogen status of the cell that GlnD senses through the glutamine level. Under low glutamine levels, catalyzes the conversion of the PII proteins and UTP to PII-UMP and PPi, while under higher glutamine levels, GlnD hydrolyzes PII-UMP to PII and UMP (deuridylylation). Thus, controls uridylylation state and activity of the PII proteins, and plays an important role in the regulation of nitrogen assimilation and metabolism. This Novosphingobium aromaticivorans (strain ATCC 700278 / DSM 12444 / CCUG 56034 / CIP 105152 / NBRC 16084 / F199) protein is Bifunctional uridylyltransferase/uridylyl-removing enzyme.